A 286-amino-acid chain; its full sequence is Phosphatidylglycerol--prolipoprotein diacylglyceryl transferase (286 aa).

The next 7 membrane-spanning stretches (helical) occupy residues 29–49 (IHWY…VGTY), 66–86 (LVFY…VFFY), 101–121 (VWEG…AMML), 130–150 (FLDL…LGRI), 181–201 (PSQL…LFWF), 209–229 (AAVA…VEFV), and 250–270 (LSLP…RHPA). Arg-149 serves as a coordination point for a 1,2-diacyl-sn-glycero-3-phospho-(1'-sn-glycerol).

Belongs to the Lgt family.

The protein resides in the cell inner membrane. It carries out the reaction L-cysteinyl-[prolipoprotein] + a 1,2-diacyl-sn-glycero-3-phospho-(1'-sn-glycerol) = an S-1,2-diacyl-sn-glyceryl-L-cysteinyl-[prolipoprotein] + sn-glycerol 1-phosphate + H(+). It functions in the pathway protein modification; lipoprotein biosynthesis (diacylglyceryl transfer). Catalyzes the transfer of the diacylglyceryl group from phosphatidylglycerol to the sulfhydryl group of the N-terminal cysteine of a prolipoprotein, the first step in the formation of mature lipoproteins. The chain is Phosphatidylglycerol--prolipoprotein diacylglyceryl transferase from Teredinibacter turnerae (strain ATCC 39867 / T7901).